Reading from the N-terminus, the 481-residue chain is tRNA:m(4)X modification enzyme TRM13 homolog (481 aa).

Residues 56-83 (RILCPLDPKHTVYEDQLAKHLKKCNSRE) form a CHHC U11-48K-type zinc finger. Residues Cys-59, His-65, His-75, and Cys-79 each contribute to the Zn(2+) site. Residues 113-140 (SLSEEQLENLIKKLRKASEGLNSTHEDH) adopt a coiled-coil conformation. Disordered stretches follow at residues 296-319 (AKRIKNDKTEKESNTLAKEGSEKD) and 379-414 (LEGSDVTPERKDAQRDENEEHDDGGDRLTDGNTDSL). Positions 385 to 407 (TPERKDAQRDENEEHDDGGDRLT) are enriched in basic and acidic residues.

The protein belongs to the methyltransferase TRM13 family.

The catalysed reaction is cytidine(4) in tRNA(Pro) + S-adenosyl-L-methionine = 2'-O-methylcytidine(4) in tRNA(Pro) + S-adenosyl-L-homocysteine + H(+). It catalyses the reaction cytidine(4) in tRNA(Gly)(GCC) + S-adenosyl-L-methionine = 2'-O-methylcytidine(4) in tRNA(Gly)(GCC) + S-adenosyl-L-homocysteine + H(+). The enzyme catalyses adenosine(4) in tRNA(His) + S-adenosyl-L-methionine = 2'-O-methyladenosine(4) in tRNA(His) + S-adenosyl-L-homocysteine + H(+). In terms of biological role, tRNA methylase which 2'-O-methylates cytidine(4) in tRNA(Pro) and tRNA(Gly)(GCC), and adenosine(4) in tRNA(His). This is tRNA:m(4)X modification enzyme TRM13 homolog (Trmt13) from Mus musculus (Mouse).